Here is a 360-residue protein sequence, read N- to C-terminus: Phenylalanine--tRNA ligase alpha subunit (360 aa).

Residue E260 coordinates Mg(2+).

The protein belongs to the class-II aminoacyl-tRNA synthetase family. Phe-tRNA synthetase alpha subunit type 1 subfamily. As to quaternary structure, tetramer of two alpha and two beta subunits. The cofactor is Mg(2+).

It is found in the cytoplasm. It carries out the reaction tRNA(Phe) + L-phenylalanine + ATP = L-phenylalanyl-tRNA(Phe) + AMP + diphosphate + H(+). This Methylobacterium sp. (strain 4-46) protein is Phenylalanine--tRNA ligase alpha subunit.